A 357-amino-acid chain; its full sequence is Peptide chain release factor 1 (357 aa).

The residue at position 234 (Gln234) is an N5-methylglutamine. The disordered stretch occupies residues 282 to 313; the sequence is DSKKQEQRSNNRKQQVGSGDRSERIRTYNFPQ.

The protein belongs to the prokaryotic/mitochondrial release factor family. Post-translationally, methylated by PrmC. Methylation increases the termination efficiency of RF1.

The protein resides in the cytoplasm. Peptide chain release factor 1 directs the termination of translation in response to the peptide chain termination codons UAG and UAA. The protein is Peptide chain release factor 1 of Borreliella afzelii (strain PKo) (Borrelia afzelii).